The chain runs to 70 residues: Large ribosomal subunit protein eL38 (70 aa).

This sequence belongs to the eukaryotic ribosomal protein eL38 family.

The polypeptide is Large ribosomal subunit protein eL38 (RpL38) (Drosophila melanogaster (Fruit fly)).